The sequence spans 236 residues: uncharacterized protein (236 aa).

This is an uncharacterized protein from Saccharolobus islandicus (Sulfolobus islandicus).